Consider the following 217-residue polypeptide: Small ribosomal subunit protein uS3c (217 aa).

A KH type-2 domain is found at 47–119 (VRTHIKSSSN…KLHIAIEKVA (73 aa)).

It belongs to the universal ribosomal protein uS3 family. In terms of assembly, part of the 30S ribosomal subunit.

It is found in the plastid. Its subcellular location is the chloroplast. This chain is Small ribosomal subunit protein uS3c (rps3), found in Pinus thunbergii (Japanese black pine).